The chain runs to 217 residues: Outer-membrane lipoprotein LolB (217 aa).

The N-terminal stretch at 1-20 (MSKTVRTLALGGLVLAGLSA) is a signal peptide. Cysteine 21 carries the N-palmitoyl cysteine lipid modification. Cysteine 21 carries S-diacylglycerol cysteine lipidation. Residues 105–124 (DTTSGAGRLEGLEGGPRSGP) form a disordered region.

Belongs to the LolB family. Monomer.

The protein resides in the cell outer membrane. Its function is as follows. Plays a critical role in the incorporation of lipoproteins in the outer membrane after they are released by the LolA protein. In Xanthomonas axonopodis pv. citri (strain 306), this protein is Outer-membrane lipoprotein LolB.